The primary structure comprises 339 residues: UDP-N-acetylenolpyruvoylglucosamine reductase (339 aa).

Positions 19–189 (VDVRAQLFAE…LRVRFALNRV (171 aa)) constitute an FAD-binding PCMH-type domain. Arg-166 is a catalytic residue. Catalysis depends on Ser-239, which acts as the Proton donor. Residue Glu-335 is part of the active site.

This sequence belongs to the MurB family. Requires FAD as cofactor.

It localises to the cytoplasm. It carries out the reaction UDP-N-acetyl-alpha-D-muramate + NADP(+) = UDP-N-acetyl-3-O-(1-carboxyvinyl)-alpha-D-glucosamine + NADPH + H(+). It functions in the pathway cell wall biogenesis; peptidoglycan biosynthesis. Its function is as follows. Cell wall formation. This Pseudomonas fluorescens (strain Pf0-1) protein is UDP-N-acetylenolpyruvoylglucosamine reductase.